A 186-amino-acid chain; its full sequence is Holliday junction branch migration complex subunit RuvA (186 aa).

The interval 1–63 (MNDYINGFLY…DNHFKYYGFF (63 aa)) is domain I. The segment at 64–137 (NQLVRDLFEI…QKELFNNKIS (74 aa)) is domain II. Residue serine 137 is a region of interest, flexible linker. The domain III stretch occupies residues 137-186 (SEKKNKVITSLEKLGYKTKDIYKIIINVDEDLTIDELTKYVLEKLSYINN).

The protein belongs to the RuvA family. Homotetramer. Forms an RuvA(8)-RuvB(12)-Holliday junction (HJ) complex. HJ DNA is sandwiched between 2 RuvA tetramers; dsDNA enters through RuvA and exits via RuvB. An RuvB hexamer assembles on each DNA strand where it exits the tetramer. Each RuvB hexamer is contacted by two RuvA subunits (via domain III) on 2 adjacent RuvB subunits; this complex drives branch migration. In the full resolvosome a probable DNA-RuvA(4)-RuvB(12)-RuvC(2) complex forms which resolves the HJ.

It localises to the cytoplasm. The RuvA-RuvB-RuvC complex processes Holliday junction (HJ) DNA during genetic recombination and DNA repair, while the RuvA-RuvB complex plays an important role in the rescue of blocked DNA replication forks via replication fork reversal (RFR). RuvA specifically binds to HJ cruciform DNA, conferring on it an open structure. The RuvB hexamer acts as an ATP-dependent pump, pulling dsDNA into and through the RuvAB complex. HJ branch migration allows RuvC to scan DNA until it finds its consensus sequence, where it cleaves and resolves the cruciform DNA. The protein is Holliday junction branch migration complex subunit RuvA of Mycoplasma capricolum subsp. capricolum (strain California kid / ATCC 27343 / NCTC 10154).